A 216-amino-acid polypeptide reads, in one-letter code: LexA repressor (216 aa).

Positions 28 to 48 form a DNA-binding region, H-T-H motif; sequence RAEIAAELGFSSANSAEEHLR. Active-site for autocatalytic cleavage activity residues include S134 and K171.

The protein belongs to the peptidase S24 family. In terms of assembly, homodimer.

The catalysed reaction is Hydrolysis of Ala-|-Gly bond in repressor LexA.. Represses a number of genes involved in the response to DNA damage (SOS response), including recA and lexA. In the presence of single-stranded DNA, RecA interacts with LexA causing an autocatalytic cleavage which disrupts the DNA-binding part of LexA, leading to derepression of the SOS regulon and eventually DNA repair. This Paraburkholderia xenovorans (strain LB400) protein is LexA repressor.